Consider the following 168-residue polypeptide: G/U mismatch-specific DNA glycosylase (168 aa).

It belongs to the uracil-DNA glycosylase (UDG) superfamily. TDG/mug family. As to quaternary structure, binds DNA as a monomer.

It is found in the cytoplasm. The enzyme catalyses Specifically hydrolyzes mismatched double-stranded DNA and polynucleotides, releasing free uracil.. Excises ethenocytosine and uracil, which can arise by alkylation or deamination of cytosine, respectively, from the corresponding mispairs with guanine in ds-DNA. It is capable of hydrolyzing the carbon-nitrogen bond between the sugar-phosphate backbone of the DNA and the mispaired base. The complementary strand guanine functions in substrate recognition. Required for DNA damage lesion repair in stationary-phase cells. The polypeptide is G/U mismatch-specific DNA glycosylase (Shigella dysenteriae serotype 1 (strain Sd197)).